The sequence spans 599 residues: Elongation factor 4 (599 aa).

The region spanning Lys2 to Glu184 is the tr-type G domain. GTP contacts are provided by residues Asp14–Thr19 and Asn131–Asp134.

The protein belongs to the TRAFAC class translation factor GTPase superfamily. Classic translation factor GTPase family. LepA subfamily.

The protein localises to the cell inner membrane. The enzyme catalyses GTP + H2O = GDP + phosphate + H(+). Functionally, required for accurate and efficient protein synthesis under certain stress conditions. May act as a fidelity factor of the translation reaction, by catalyzing a one-codon backward translocation of tRNAs on improperly translocated ribosomes. Back-translocation proceeds from a post-translocation (POST) complex to a pre-translocation (PRE) complex, thus giving elongation factor G a second chance to translocate the tRNAs correctly. Binds to ribosomes in a GTP-dependent manner. The polypeptide is Elongation factor 4 (Shigella sonnei (strain Ss046)).